A 708-amino-acid polypeptide reads, in one-letter code: Phosphate acetyltransferase (708 aa).

The interval 388–708 (EFCYNLKLLS…TIALTSIQSE (321 aa)) is phosphate acetyltransferase.

It in the N-terminal section; belongs to the CobB/CobQ family. The protein in the C-terminal section; belongs to the phosphate acetyltransferase and butyryltransferase family. As to quaternary structure, homohexamer.

It is found in the cytoplasm. The enzyme catalyses acetyl-CoA + phosphate = acetyl phosphate + CoA. It functions in the pathway metabolic intermediate biosynthesis; acetyl-CoA biosynthesis; acetyl-CoA from acetate: step 2/2. Functionally, involved in acetate metabolism. The protein is Phosphate acetyltransferase (pta) of Buchnera aphidicola subsp. Acyrthosiphon pisum (strain APS) (Acyrthosiphon pisum symbiotic bacterium).